The following is a 208-amino-acid chain: Large ribosomal subunit protein uL3 (208 aa).

A disordered region spans residues 117 to 149; it reads GFQGAIKRHGQSRGPMAHGSRYHRRPGSMGPVA.

This sequence belongs to the universal ribosomal protein uL3 family. As to quaternary structure, part of the 50S ribosomal subunit. Forms a cluster with proteins L14 and L19.

Functionally, one of the primary rRNA binding proteins, it binds directly near the 3'-end of the 23S rRNA, where it nucleates assembly of the 50S subunit. The sequence is that of Large ribosomal subunit protein uL3 from Exiguobacterium sp. (strain ATCC BAA-1283 / AT1b).